We begin with the raw amino-acid sequence, 180 residues long: Adenine phosphoribosyltransferase (180 aa).

S2 carries the N-acetylserine modification. S15 and S30 each carry phosphoserine. Y60 is subject to Phosphotyrosine. S66 is subject to Phosphoserine. K114 carries the post-translational modification N6-acetyllysine. A Phosphothreonine modification is found at T135.

This sequence belongs to the purine/pyrimidine phosphoribosyltransferase family. In terms of assembly, homodimer.

It is found in the cytoplasm. It catalyses the reaction AMP + diphosphate = 5-phospho-alpha-D-ribose 1-diphosphate + adenine. Its pathway is purine metabolism; AMP biosynthesis via salvage pathway; AMP from adenine: step 1/1. In terms of biological role, catalyzes a salvage reaction resulting in the formation of AMP, that is energically less costly than de novo synthesis. In Mastomys natalensis (African soft-furred rat), this protein is Adenine phosphoribosyltransferase.